Reading from the N-terminus, the 58-residue chain is Parvalbumin beta 3 (58 aa).

The residue at position 1 (alanine 1) is an N-acetylalanine. The EF-hand domain occupies 24–58; sequence FNYKTFFKFFAIIDQDHSGFIEEEELKALSDAETK. 6 residues coordinate Ca(2+): aspartate 37, aspartate 39, serine 41, phenylalanine 43, glutamate 45, and glutamate 48.

It belongs to the parvalbumin family.

Its function is as follows. In muscle, parvalbumin is thought to be involved in relaxation after contraction. It binds two calcium ions. The chain is Parvalbumin beta 3 from Merluccius senegalensis (Senegalese hake).